A 247-amino-acid polypeptide reads, in one-letter code: Tetraspanin-18 (247 aa).

Residues 1–15 (MEGDCLSCMKYLMFL) are Cytoplasmic-facing. The chain crosses the membrane as a helical span at residues 16 to 36 (FNFFIFLGGACLLGVGIWVIV). Residues 37–49 (DPTGFREIVAANP) lie on the Extracellular side of the membrane. The chain crosses the membrane as a helical span at residues 50 to 70 (LLFTGAYIMLAMGAMLFLLGF). Residues 71–82 (LGCCGAIRENKC) lie on the Cytoplasmic side of the membrane. Residues 83 to 103 (LLLFFFMFILLIFLAELSAAI) traverse the membrane as a helical segment. Residues 104–222 (LAFIFRENLT…SFETYVYLAG (119 aa)) are Extracellular-facing. N-linked (GlcNAc...) asparagine glycosylation is found at asparagine 111 and asparagine 129. Residues 223–243 (ALAIGVLAIELFAMIFAMCLF) traverse the membrane as a helical segment. The Cytoplasmic segment spans residues 244–247 (RGIQ).

The protein belongs to the tetraspanin (TM4SF) family.

The protein resides in the membrane. Maintains CDH6 protein and promotes CDH6-dependent adherens junctions, inhibiting neural crest migration. The polypeptide is Tetraspanin-18 (Gallus gallus (Chicken)).